We begin with the raw amino-acid sequence, 41 residues long: Divisome-associated membrane protein Blr (41 aa).

Over 1 to 3 (MNR) the chain is Cytoplasmic. A helical membrane pass occupies residues 4–24 (LIELTGWIVLVVSVILLGVAS). The Periplasmic segment spans residues 25 to 41 (HIDNYQPPEQSASVQHK).

In terms of assembly, interacts with FtsL and several other divisomal proteins, including FtsI, FtsK, FtsN, FtsQ, FtsW and YmgF. In terms of processing, the N-terminus is blocked.

The protein resides in the cell inner membrane. Its function is as follows. Component of the cell division machinery, which is probably involved in the stabilization of the divisome under certain stress conditions. In Escherichia coli (strain K12), this protein is Divisome-associated membrane protein Blr (blr).